Here is a 375-residue protein sequence, read N- to C-terminus: Neuropeptide Y receptor type 4 (375 aa).

The Extracellular portion of the chain corresponds to 1–39; that stretch reads MNTSHFLAPLFPGSLQGKNGTNPLDSPYNFSDGCQDSAE. N-linked (GlcNAc...) asparagine glycosylation is found at Asn2, Asn19, and Asn29. Residues 40–60 traverse the membrane as a helical segment; that stretch reads LLAFIITTYSIETILGVLGNL. The Cytoplasmic segment spans residues 61-78; that stretch reads CLIFVTTRQKEKSNVTNL. Residues 79–99 traverse the membrane as a helical segment; it reads LIANLAFSDFLMCLICQPLTV. Over 100 to 116 the chain is Extracellular; it reads TYTIMDYWIFGEVLCKM. A disulfide bridge connects residues Cys114 and Cys201. The chain crosses the membrane as a helical span at residues 117–137; that stretch reads LTFIQCMSVTVSILSLVLVAL. Topologically, residues 138–155 are cytoplasmic; sequence ERHQLIINPTGWKPSIFQ. A helical transmembrane segment spans residues 156–176; the sequence is AYLGIVVIWFVSCFLSLPFLA. At 177-211 the chain is on the extracellular side; sequence NSTLNDLFHYNHSKVVEFLEDKVVCFVSWSSDHHR. Asn187 is a glycosylation site (N-linked (GlcNAc...) asparagine). A helical transmembrane segment spans residues 212-232; that stretch reads LIYTTFLLLFQYCIPLAFILV. The Cytoplasmic segment spans residues 233–266; sequence CYIRIYQRLQRQKHVFHAHACSSRAGQMKRINSM. The chain crosses the membrane as a helical span at residues 267–287; that stretch reads LMTMVTAFAVLWLPLHVFNTL. Residues 288–301 are Extracellular-facing; sequence EDWYQEAIPACHGN. Residues 302-322 traverse the membrane as a helical segment; it reads LIFLMCHLLAMASTCVNPFIY. Over 323–375 the chain is Cytoplasmic; it reads GFLNINFKKDIKALVLTCHCRSPRGESEHLPLSTVHTDLSKGSMRMGSKSNFI. The S-palmitoyl cysteine moiety is linked to residue Cys340.

It belongs to the G-protein coupled receptor 1 family. Heart, detected in small intestine.

Its subcellular location is the cell membrane. In terms of biological role, g protein-coupled receptor for PPY/pancreatic polypeptide/PP that is negatively coupled to cAMP. Has much lower affinity for the NPY/neuropeptide Y and PYY/peptide YY. The protein is Neuropeptide Y receptor type 4 (Npy4r) of Mus musculus (Mouse).